The sequence spans 643 residues: Probable extracellular metalloproteinase 4 (643 aa).

The N-terminal stretch at 1–18 (MHGLLLAGLLALPLNVLA) is a signal peptide. Positions 19-254 (HPTESHSSGV…VHSVVDYVSA (236 aa)) are excised as a propeptide. Over residues 47 to 57 (TKSDAVPKQDG) the composition is skewed to basic and acidic residues. A disordered region spans residues 47–69 (TKSDAVPKQDGESFTTSSTGDDN). Polar residues predominate over residues 58 to 69 (ESFTTSSTGDDN). Asn-271 and Asn-420 each carry an N-linked (GlcNAc...) asparagine glycan. A Zn(2+)-binding site is contributed by His-437. Glu-438 is an active-site residue. His-441 serves as a coordination point for Zn(2+). 2 N-linked (GlcNAc...) asparagine glycosylation sites follow: Asn-603 and Asn-629.

This sequence belongs to the peptidase M36 family. The cofactor is Zn(2+).

The protein localises to the secreted. Functionally, secreted metalloproteinase probably acting as a virulence factor. The chain is Probable extracellular metalloproteinase 4 (MEP4) from Arthroderma benhamiae (strain ATCC MYA-4681 / CBS 112371) (Trichophyton mentagrophytes).